Here is a 227-residue protein sequence, read N- to C-terminus: Cytochrome c oxidase subunit 2 (227 aa).

The Mitochondrial intermembrane portion of the chain corresponds to 1 to 14 (MAYPFQLGLQDATS). Residues 15–45 (PIMEELLHFHDHTLMIVFLISSLVLYIISSM) form a helical membrane-spanning segment. The Mitochondrial matrix portion of the chain corresponds to 46 to 59 (LTTKLTHTSTMDAQ). Residues 60 to 87 (EVETVWTILPAIILVLIALPSLRILYMM) traverse the membrane as a helical segment. Residues 88-227 (DEINNPSLTV…YFETWSALML (140 aa)) lie on the Mitochondrial intermembrane side of the membrane. Positions 161, 196, 198, 200, 204, and 207 each coordinate Cu cation. Position 198 (Glu-198) interacts with Mg(2+). Phosphotyrosine is present on Tyr-218.

This sequence belongs to the cytochrome c oxidase subunit 2 family. Component of the cytochrome c oxidase (complex IV, CIV), a multisubunit enzyme composed of 14 subunits. The complex is composed of a catalytic core of 3 subunits MT-CO1, MT-CO2 and MT-CO3, encoded in the mitochondrial DNA, and 11 supernumerary subunits COX4I, COX5A, COX5B, COX6A, COX6B, COX6C, COX7A, COX7B, COX7C, COX8 and NDUFA4, which are encoded in the nuclear genome. The complex exists as a monomer or a dimer and forms supercomplexes (SCs) in the inner mitochondrial membrane with NADH-ubiquinone oxidoreductase (complex I, CI) and ubiquinol-cytochrome c oxidoreductase (cytochrome b-c1 complex, complex III, CIII), resulting in different assemblies (supercomplex SCI(1)III(2)IV(1) and megacomplex MCI(2)III(2)IV(2)). Found in a complex with TMEM177, COA6, COX18, COX20, SCO1 and SCO2. Interacts with TMEM177 in a COX20-dependent manner. Interacts with COX20. Interacts with COX16. It depends on Cu cation as a cofactor.

The protein resides in the mitochondrion inner membrane. It catalyses the reaction 4 Fe(II)-[cytochrome c] + O2 + 8 H(+)(in) = 4 Fe(III)-[cytochrome c] + 2 H2O + 4 H(+)(out). Component of the cytochrome c oxidase, the last enzyme in the mitochondrial electron transport chain which drives oxidative phosphorylation. The respiratory chain contains 3 multisubunit complexes succinate dehydrogenase (complex II, CII), ubiquinol-cytochrome c oxidoreductase (cytochrome b-c1 complex, complex III, CIII) and cytochrome c oxidase (complex IV, CIV), that cooperate to transfer electrons derived from NADH and succinate to molecular oxygen, creating an electrochemical gradient over the inner membrane that drives transmembrane transport and the ATP synthase. Cytochrome c oxidase is the component of the respiratory chain that catalyzes the reduction of oxygen to water. Electrons originating from reduced cytochrome c in the intermembrane space (IMS) are transferred via the dinuclear copper A center (CU(A)) of subunit 2 and heme A of subunit 1 to the active site in subunit 1, a binuclear center (BNC) formed by heme A3 and copper B (CU(B)). The BNC reduces molecular oxygen to 2 water molecules using 4 electrons from cytochrome c in the IMS and 4 protons from the mitochondrial matrix. This Speothos venaticus (Bush dog) protein is Cytochrome c oxidase subunit 2 (MT-CO2).